The sequence spans 257 residues: UPF0246 protein HAPS_0280 (257 aa).

Belongs to the UPF0246 family.

This chain is UPF0246 protein HAPS_0280, found in Glaesserella parasuis serovar 5 (strain SH0165) (Haemophilus parasuis).